Here is a 171-residue protein sequence, read N- to C-terminus: Crossover junction endodeoxyribonuclease RuvC (171 aa).

Active-site residues include Asp7, Glu66, and Asp138. Residues Asp7, Glu66, and Asp138 each contribute to the Mg(2+) site.

Belongs to the RuvC family. In terms of assembly, homodimer which binds Holliday junction (HJ) DNA. The HJ becomes 2-fold symmetrical on binding to RuvC with unstacked arms; it has a different conformation from HJ DNA in complex with RuvA. In the full resolvosome a probable DNA-RuvA(4)-RuvB(12)-RuvC(2) complex forms which resolves the HJ. Requires Mg(2+) as cofactor.

The protein resides in the cytoplasm. It carries out the reaction Endonucleolytic cleavage at a junction such as a reciprocal single-stranded crossover between two homologous DNA duplexes (Holliday junction).. In terms of biological role, the RuvA-RuvB-RuvC complex processes Holliday junction (HJ) DNA during genetic recombination and DNA repair. Endonuclease that resolves HJ intermediates. Cleaves cruciform DNA by making single-stranded nicks across the HJ at symmetrical positions within the homologous arms, yielding a 5'-phosphate and a 3'-hydroxyl group; requires a central core of homology in the junction. The consensus cleavage sequence is 5'-(A/T)TT(C/G)-3'. Cleavage occurs on the 3'-side of the TT dinucleotide at the point of strand exchange. HJ branch migration catalyzed by RuvA-RuvB allows RuvC to scan DNA until it finds its consensus sequence, where it cleaves and resolves the cruciform DNA. The protein is Crossover junction endodeoxyribonuclease RuvC of Francisella philomiragia subsp. philomiragia (strain ATCC 25017 / CCUG 19701 / FSC 153 / O#319-036).